The primary structure comprises 196 residues: Large ribosomal subunit protein bL9 (196 aa).

It belongs to the bacterial ribosomal protein bL9 family.

In terms of biological role, binds to the 23S rRNA. This Gluconobacter oxydans (strain 621H) (Gluconobacter suboxydans) protein is Large ribosomal subunit protein bL9.